Consider the following 553-residue polypeptide: MSDIALSISMLSLVAVLGLWLGNWRVYGVGLGIGGVLFGGIIVGHFAGVSDLALDEQTLHFIQEFGLILFVYTIGIQVGPGFFSSLRSSGLKLNGFAALLVILGCVVAAGLHQLFDVPLPVILGVFSGAVTNTPSLGAGQQILAELGADPGSTGLMGMGYAVAYPFGICGILLTMWLVRLFFRIKIDEEADLFEQHAGKTKESLQTINIAVRNPNMHGLMLCEIPSLDESDVICSRLKRGEELMVPRSDSRIELGDLLHLVGERHALHKVLLVLGEEVETSLSTRGTDLRVERVVVTNEQVLGKKIRDLDIKQKYDVVISRLNRAGIELVPTSQTSLQFGDILNLVGRLDAIEAVTNVVGNVQQKLQQMQMLPVFIGIGLGVLLGSIPFYLPGFPAALKLGLAGGPLVVALILSRIGSIGKLYWFMPPSANLALREIGIVLFLAVVGFKSGAGFVDTLINGDGPAWMMYGMAITLIPLLVVGVLARLYGKMSYLTLCGLLAGSMTDPPALAFANGMHPTSGASALSYATVYPLVMFLRIISPQLLAILLWAGV.

Transmembrane regions (helical) follow at residues 4-24, 29-49, 65-85, 95-115, and 158-178; these read IALS…LGNW, VGLG…FAGV, FGLI…FFSS, GFAA…HQLF, and MGYA…MWLV. RCK C-terminal domains lie at 191-276 and 279-361; these read DLFE…VLGE and ETSL…VVGN. The next 6 helical transmembrane spans lie at 371-391, 403-425, 439-459, 465-485, 493-513, and 533-553; these read MLPV…PFYL, AGGP…LYWF, IVLF…DTLI, AWMM…GVLA, YLTL…LAFA, and LVMF…WAGV.

Belongs to the AAE transporter (TC 2.A.81) family. YidE subfamily.

It is found in the cell membrane. This is Putative transport protein ASA_0825 from Aeromonas salmonicida (strain A449).